We begin with the raw amino-acid sequence, 175 residues long: MKAQPTLIALGRIIGVHGVRGWVKIHSECRPREAIFNYSVFQATRHHHAQTLKLLDARRSGKSLIALFADICDRDAALQLNGFTLNVTRADLPQLKNGQYYWTDVLGLTVINRSGEHLGKVCDIFETGANDVLVINKDGQEYLIPFISERYIDRIDFENKYLYVDWQMAWTDDAD.

Residues 97 to 170 form the PRC barrel domain; it reads NGQYYWTDVL…YLYVDWQMAW (74 aa).

The protein belongs to the RimM family. As to quaternary structure, binds ribosomal protein uS19.

Its subcellular location is the cytoplasm. In terms of biological role, an accessory protein needed during the final step in the assembly of 30S ribosomal subunit, possibly for assembly of the head region. Essential for efficient processing of 16S rRNA. May be needed both before and after RbfA during the maturation of 16S rRNA. It has affinity for free ribosomal 30S subunits but not for 70S ribosomes. This chain is Ribosome maturation factor RimM, found in Dichelobacter nodosus (strain VCS1703A).